The following is a 231-amino-acid chain: Uracil-DNA glycosylase (231 aa).

Asp-71 functions as the Proton acceptor in the catalytic mechanism.

The protein belongs to the uracil-DNA glycosylase (UDG) superfamily. UNG family.

The protein resides in the cytoplasm. It carries out the reaction Hydrolyzes single-stranded DNA or mismatched double-stranded DNA and polynucleotides, releasing free uracil.. In terms of biological role, excises uracil residues from the DNA which can arise as a result of misincorporation of dUMP residues by DNA polymerase or due to deamination of cytosine. The polypeptide is Uracil-DNA glycosylase (Pseudomonas aeruginosa (strain ATCC 15692 / DSM 22644 / CIP 104116 / JCM 14847 / LMG 12228 / 1C / PRS 101 / PAO1)).